The following is a 517-amino-acid chain: Gallate 1-beta-glucosyltransferase 84A24 (517 aa).

Residue H19 is the Proton acceptor of the active site. H19 contacts an anthocyanidin. UDP-alpha-D-glucose is bound by residues Q344, H359, W362, N363, S364, and E367. An anthocyanidin is bound at residue G382. Residues D383 and Q384 each coordinate UDP-alpha-D-glucose.

This sequence belongs to the UDP-glycosyltransferase family. As to expression, highly expressed in leaf. Also expressed in peel, stem, root and aril.

Its subcellular location is the cytoplasm. It carries out the reaction 3,4,5-trihydroxybenzoate + UDP-alpha-D-glucose = 1-O-galloyl-beta-D-glucose + UDP. The enzyme catalyses 3,4-dihydroxybenzoate + UDP-alpha-D-glucose = 1-O-(3,4-dihydroxy-benzoyl)-beta-D-glucose + UDP. It catalyses the reaction 4-hydroxybenzoate + UDP-alpha-D-glucose = 4-(beta-D-glucosyloxy)benzoate + UDP + H(+). The catalysed reaction is (E)-cinnamate + UDP-alpha-D-glucose = 1-O-(trans-cinnamoyl)-beta-D-glucose + UDP. It carries out the reaction (E)-sinapate + UDP-alpha-D-glucose = 1-O-(trans-sinapoyl)-beta-D-glucose + UDP. The enzyme catalyses (E)-4-coumarate + UDP-alpha-D-glucose = 1-O-(trans-4-coumaroyl)-beta-D-glucose + UDP. It catalyses the reaction (E)-caffeate + UDP-alpha-D-glucose = 1-O-[(E)-caffeoyl]-beta-D-glucose + UDP. The catalysed reaction is (E)-ferulate + UDP-alpha-D-glucose = 1-O-[(E)-feruloyl]-beta-D-glucose + UDP. It carries out the reaction genistein + UDP-alpha-D-glucose = genistein 7-O-beta-D-glucoside + UDP + H(+). The enzyme catalyses apigenin + UDP-alpha-D-glucose = apigenin 7-O-beta-D-glucoside + UDP + H(+). It catalyses the reaction luteolin + UDP-alpha-D-glucose = luteolin 7-O-beta-D-glucoside + UDP + H(+). Its function is as follows. Glucosyltransferase that catalyzes the formation of 1-O-beta-D-glucose esters with hydroxybenzoic acids and cinnamic acid including its derivatives as preferred glucosyl acceptors. Has significant activity with gallic acid (3,4,5-trihydroxybenzoic acid), 3,4-dihydroxybenzoic acid, 4-hydroxybenzoic acid, cinnamic acid, sinapic acid, coumaric acid, caffeic acid and ferulic acid in vitro. Gallic acid is the predicted native substrate of the enzyme, which thus catalyzes the formation of 1-O-galloyl-beta-D-glucose, the first committed step of hydrolyzable tannins (HTs) biosynthesis, with punicalagin isomers being the major HTs of pomegranate. Catalyzes the formation of flavonoid glucosides with genistein, apigenin and luteolin in vitro. Has low activity with benzoic acid, 2-hydroxybenzoic acid, 3-hydroxybenzoic acid, 2,4-dihydroxybenzoic acid, naringenin and quercetin. No activity with catechol, resveratrol, chlorogenic acid, catechin and epicatechin (building blocks of proanthocyanidins) or cyanidin, delphinidin and pelargonidin (the three anthocyanidins). The sequence is that of Gallate 1-beta-glucosyltransferase 84A24 from Punica granatum (Pomegranate).